The primary structure comprises 497 residues: O-acetyltransferase PaAT-1 (497 aa).

The N-linked (GlcNAc...) asparagine glycan is linked to N35. A run of 9 helical transmembrane segments spans residues 69 to 89 (GISA…GWHI), 107 to 127 (LLIS…YSLS), 157 to 177 (LFVP…LNWY), 241 to 261 (LWTL…LMAF), 278 to 298 (VLFQ…GMLI), 329 to 349 (AIGV…HLAF), 375 to 395 (PIAA…QVLF), 406 to 426 (ISFA…HALG), and 443 to 463 (VAIS…ADFV).

Belongs to the acyltransferase 3 family.

It localises to the membrane. It participates in mycotoxin biosynthesis. Its function is as follows. O-acetyltransferase; part of the 2 gene clusters that mediate the biosynthesis of fusicoccins, diterpene glucosides that display phytohormone-like activity and function as potent activators of plasma membrane H(+)-ATPases in plants by modifying 14-3-3 proteins and cause the plant disease constriction canker. The first step in the pathway is performed by the fusicoccadiene synthase PaFS that possesses both prenyl transferase and terpene cyclase activity, converting isopentenyl diphosphate and dimethylallyl diphosphate into geranylgeranyl diphosphate (GGDP) and successively converting GGDP into fusicocca-2,10(14)-diene, a precursor for fusicoccin H. The second step is the oxidation at the C-8 position by the cytochrome P450 monooxygenase PaP450-2 to yield fusicocca-2,10(14)-diene-8-beta-ol. The cytochrome P450 monooxygenase PaP450-1 then catalyzes the hydroxylation at the C-16 position to produce fusicocca-2,10(14)-diene-8-beta,16-diol. The dioxygenase fc-dox then catalyzes the 16-oxydation of fusicocca-2,10(14)-diene-8-beta,16-diol to yield an aldehyde (8-beta-hydroxyfusicocca-1,10(14)-dien-16-al). The short-chain dehydrogenase/reductase fc-sdr catalyzes the reduction of the aldehyde to yield fusicocca-1,10(14)-diene-8-beta,16-diol. The next step is the hydroxylation at C-9 performed by the cytochrome P450 monooxygenase PaP450-3 that leads to fusicoccin H aglycon which is glycosylated to fusicoccin H by the O-glycosyltransferase PaGT. Hydroxylation at C-12 by the cytochrome P450 monooxygenase PaP450-4 leads then to the production of fusicoccin Q and is followed by methylation by the O-methyltransferase PaMT to yield fusicoccin P. Fusicoccin P is further converted to fusicoccin J via prenylation by the O-glucose prenyltransferase PaPT. Cytochrome P450 monooxygenase PaP450-5 then performs hydroxylation at C-19 to yield dideacetyl-fusicoccin A which is acetylated to 3'-O-deacetyl-fusicoccin A by the O-acetyltransferase PaAT-2. Finally, a another acetylation by the O-acetyltransferase PaAT-1 yields fusicoccin A. This chain is O-acetyltransferase PaAT-1, found in Phomopsis amygdali (Fusicoccum amygdali).